Here is a 94-residue protein sequence, read N- to C-terminus: Cytochrome c-551 (94 aa).

Positions 1–14 (MAFTAMTVAPSALA) are cleaved as a signal peptide. Heme c contacts are provided by C24, C27, H28, and M73.

In terms of processing, binds 1 heme c group covalently per subunit.

Its function is as follows. Efficiently couple electron transfer between the cytochrome bc1 complex and the photosynthetic reaction center. The chain is Cytochrome c-551 from Allochromatium vinosum (strain ATCC 17899 / DSM 180 / NBRC 103801 / NCIMB 10441 / D) (Chromatium vinosum).